The sequence spans 294 residues: Probable metallo-hydrolase BURPS1710b_2304 (294 aa).

A divalent metal cation is bound by residues His-68, His-70, Asp-72, His-73, His-143, Asp-170, and His-212.

The protein belongs to the metallo-beta-lactamase superfamily. The cofactor is a divalent metal cation.

In terms of biological role, probable hydrolase. Does not have beta-lactamase activity. The protein is Probable metallo-hydrolase BURPS1710b_2304 of Burkholderia pseudomallei (strain 1710b).